The following is a 284-amino-acid chain: RNase adapter protein RapZ (284 aa).

ATP is bound at residue 8–15 (GRSGSGKS). 56-59 (DVRN) is a binding site for GTP. Residues 266 to 284 (RSRGKNVQSRHRTLEKRKT) form an RNA-binding region.

This sequence belongs to the RapZ-like family. RapZ subfamily. As to quaternary structure, homotrimer.

Its function is as follows. Modulates the synthesis of GlmS, by affecting the processing and stability of the regulatory small RNA GlmZ. When glucosamine-6-phosphate (GlcN6P) concentrations are high in the cell, RapZ binds GlmZ and targets it to cleavage by RNase E. Consequently, GlmZ is inactivated and unable to activate GlmS synthesis. Under low GlcN6P concentrations, RapZ is sequestered and inactivated by an other regulatory small RNA, GlmY, preventing GlmZ degradation and leading to synthesis of GlmS. This Salmonella typhi protein is RNase adapter protein RapZ.